The primary structure comprises 330 residues: Probable UDP-3-O-acylglucosamine N-acyltransferase 1, mitochondrial (330 aa).

Residues 1-52 constitute a mitochondrion transit peptide; sequence MANSLRTLFSVSTHGVFLNKRSSYRVRKVFVGMPLRICSEIPRFVSVSCIRS. Residue 160–162 participates in UDP-N-acetyl-alpha-D-glucosamine binding; sequence FGF. Hexadecanoate is bound by residues aspartate 210 and glutamine 214. The active-site Proton acceptor is histidine 217. Residues asparagine 218, serine 236, and histidine 254 each coordinate UDP-N-acetyl-alpha-D-glucosamine.

Belongs to the transferase hexapeptide repeat family. LpxD subfamily. Homotrimer.

Its subcellular location is the mitochondrion. It carries out the reaction a UDP-3-O-[(3R)-3-hydroxyacyl]-alpha-D-glucosamine + a (3R)-hydroxyacyl-[ACP] = a UDP-2-N,3-O-bis[(3R)-3-hydroxyacyl]-alpha-D-glucosamine + holo-[ACP] + H(+). The protein operates within glycolipid biosynthesis; lipid IV(A) biosynthesis; lipid IV(A) from (3R)-3-hydroxytetradecanoyl-[acyl-carrier-protein] and UDP-N-acetyl-alpha-D-glucosamine: step 3/6. Its function is as follows. Involved in the biosynthesis of lipid A, a phosphorylated glycolipid that in bacteria anchors the lipopolysaccharide to the outer membrane of the cell. Lipid A-like molecules in plants may serve as structural components of the outer membranes of mitochondria and/or chloroplasts, or may be involved in signal transduction or plant defense responses. This Arabidopsis thaliana (Mouse-ear cress) protein is Probable UDP-3-O-acylglucosamine N-acyltransferase 1, mitochondrial (LPXD1).